An 86-amino-acid chain; its full sequence is Small ribosomal subunit protein bS18c (86 aa).

Belongs to the bacterial ribosomal protein bS18 family. Part of the 30S ribosomal subunit.

It localises to the plastid. The protein localises to the chloroplast. This Pseudotsuga menziesii (Douglas-fir) protein is Small ribosomal subunit protein bS18c.